We begin with the raw amino-acid sequence, 350 residues long: DNA polymerase IV (350 aa).

In terms of domain architecture, UmuC spans 5–181 (IMHYDMDAFY…KKIKIIPGVG (177 aa)). The Mg(2+) site is built by Asp9 and Asp99. The active site involves Glu100.

It belongs to the DNA polymerase type-Y family. In terms of assembly, monomer. The cofactor is Mg(2+).

It is found in the cytoplasm. It carries out the reaction DNA(n) + a 2'-deoxyribonucleoside 5'-triphosphate = DNA(n+1) + diphosphate. Its function is as follows. Poorly processive, error-prone DNA polymerase involved in untargeted mutagenesis. Copies undamaged DNA at stalled replication forks, which arise in vivo from mismatched or misaligned primer ends. These misaligned primers can be extended by PolIV. Exhibits no 3'-5' exonuclease (proofreading) activity. May be involved in translesional synthesis, in conjunction with the beta clamp from PolIII. This is DNA polymerase IV from Fusobacterium nucleatum subsp. nucleatum (strain ATCC 25586 / DSM 15643 / BCRC 10681 / CIP 101130 / JCM 8532 / KCTC 2640 / LMG 13131 / VPI 4355).